Here is a 90-residue protein sequence, read N- to C-terminus: DNA-binding protein HU-1 (90 aa).

T4 is subject to Phosphothreonine. The disordered stretch occupies residues 55 to 90 (RSARKGRNPQTGEEIEIPATKNPAFKPGKQLKDAVN).

This sequence belongs to the bacterial histone-like protein family. In terms of assembly, homodimer.

In terms of biological role, histone-like DNA-binding protein which is capable of wrapping DNA to stabilize it, and thus to prevent its denaturation under extreme environmental conditions. The sequence is that of DNA-binding protein HU-1 (hup1) from Halalkalibacterium halodurans (strain ATCC BAA-125 / DSM 18197 / FERM 7344 / JCM 9153 / C-125) (Bacillus halodurans).